Here is a 425-residue protein sequence, read N- to C-terminus: Serine--tRNA ligase (425 aa).

230–232 contributes to the L-serine binding site; the sequence is TAE. 261–263 contributes to the ATP binding site; sequence RAE. Glu284 is an L-serine binding site. ATP is bound at residue 348 to 351; the sequence is EISS. L-serine is bound at residue Ser384.

This sequence belongs to the class-II aminoacyl-tRNA synthetase family. Type-1 seryl-tRNA synthetase subfamily. In terms of assembly, homodimer. The tRNA molecule binds across the dimer.

The protein resides in the cytoplasm. It carries out the reaction tRNA(Ser) + L-serine + ATP = L-seryl-tRNA(Ser) + AMP + diphosphate + H(+). The catalysed reaction is tRNA(Sec) + L-serine + ATP = L-seryl-tRNA(Sec) + AMP + diphosphate + H(+). It participates in aminoacyl-tRNA biosynthesis; selenocysteinyl-tRNA(Sec) biosynthesis; L-seryl-tRNA(Sec) from L-serine and tRNA(Sec): step 1/1. In terms of biological role, catalyzes the attachment of serine to tRNA(Ser). Is also able to aminoacylate tRNA(Sec) with serine, to form the misacylated tRNA L-seryl-tRNA(Sec), which will be further converted into selenocysteinyl-tRNA(Sec). In Desulforudis audaxviator (strain MP104C), this protein is Serine--tRNA ligase.